The primary structure comprises 264 residues: Apolipoprotein A-I (264 aa).

The signal sequence occupies residues M1–A18. Repeat copies occupy residues L67–G88 and P89–N110. Positions L67–Q264 are 10 X approximate tandem repeats. M109 carries the post-translational modification Methionine sulfoxide. Residues K111–Q121 form a 3; half-length repeat. 3 consecutive repeat copies span residues P122–A143, P144–S165, and P166–A187. The 7; truncated repeat unit spans residues P188–N207. M193 carries the methionine sulfoxide modification. Repeat unit 8 spans residues P208 to R229. One copy of the 9; half-length repeat lies at P230–M240. 2 positions are modified to methionine sulfoxide: M240 and M242. Copy 10 of the repeat occupies P241–Q264.

It belongs to the apolipoprotein A1/A4/E family. Homodimer. Interacts with APOA1BP and CLU. Component of a sperm activating protein complex (SPAP), consisting of APOA1, an immunoglobulin heavy chain, an immunoglobulin light chain and albumin. Interacts with NDRG1. Interacts with SCGB3A2. Interacts with NAXE and YJEFN3. In terms of processing, glycosylated. Palmitoylated. Post-translationally, may be acylated. In terms of processing, phosphorylation sites are present in the extracellular medium. Major protein of plasma HDL, also found in chylomicrons.

Its subcellular location is the secreted. Participates in the reverse transport of cholesterol from tissues to the liver for excretion by promoting cholesterol efflux from tissues and by acting as a cofactor for the lecithin cholesterol acyltransferase (LCAT). As part of the SPAP complex, activates spermatozoa motility. This Mus musculus (Mouse) protein is Apolipoprotein A-I (Apoa1).